The chain runs to 485 residues: Proline--tRNA ligase (485 aa).

The protein belongs to the class-II aminoacyl-tRNA synthetase family. ProS type 3 subfamily. Homodimer.

The protein resides in the cytoplasm. It catalyses the reaction tRNA(Pro) + L-proline + ATP = L-prolyl-tRNA(Pro) + AMP + diphosphate. Its function is as follows. Catalyzes the attachment of proline to tRNA(Pro) in a two-step reaction: proline is first activated by ATP to form Pro-AMP and then transferred to the acceptor end of tRNA(Pro). This chain is Proline--tRNA ligase, found in Methanopyrus kandleri (strain AV19 / DSM 6324 / JCM 9639 / NBRC 100938).